Reading from the N-terminus, the 215-residue chain is Probable nicotinate-nucleotide adenylyltransferase (215 aa).

It belongs to the NadD family.

The catalysed reaction is nicotinate beta-D-ribonucleotide + ATP + H(+) = deamido-NAD(+) + diphosphate. It functions in the pathway cofactor biosynthesis; NAD(+) biosynthesis; deamido-NAD(+) from nicotinate D-ribonucleotide: step 1/1. Functionally, catalyzes the reversible adenylation of nicotinate mononucleotide (NaMN) to nicotinic acid adenine dinucleotide (NaAD). The chain is Probable nicotinate-nucleotide adenylyltransferase from Fervidobacterium nodosum (strain ATCC 35602 / DSM 5306 / Rt17-B1).